The primary structure comprises 373 residues: Glutamine synthetase (373 aa).

An N-acetylalanine modification is found at alanine 2. Residues 2 to 25 (ATSASSHLNKGIKQMYMNLPQGEK) are required for glutamine-induced ubiquitination by CRL4(CRBN) and proteasomal degradation. 2 positions are modified to N6-acetyllysine: lysine 11 and lysine 14. The region spanning 24-106 (EKIQLMYIWV…VFCEVFKYNR (83 aa)) is the GS beta-grasp domain. A Phosphotyrosine modification is found at tyrosine 104. Residues 113–373 (LRHSCKRIMD…TGDEPFQYKN (261 aa)) form the GS catalytic domain. ATP is bound at residue glutamate 134. Residues glutamate 134, glutamate 136, glutamate 196, and glutamate 203 each contribute to the Mn(2+) site. Residue 203-208 (EFQIGP) participates in ATP binding. Residue 246–247 (NW) participates in L-glutamate binding. Histidine 253 contributes to the Mn(2+) binding site. Residues 255-257 (NFS), arginine 319, and arginine 324 contribute to the ATP site. Arginine 319 contributes to the L-glutamate binding site. 336-338 (YFE) is a binding site for ADP. Position 338 (glutamate 338) interacts with Mn(2+). L-glutamate is bound at residue arginine 340. Serine 343 carries the phosphoserine modification.

The protein belongs to the glutamine synthetase family. Decamer; composed of two pentamers. Interacts with PALMD. Interacts with RHOJ. Interacts with BEST2; this interaction tethers a fraction of GLUL to the membrane, causing a decrease of cytosolic glutamine synthase (GS) activity and inhibits the chloride channel activity of BEST2 by affecting the gating at the aperture in the absence of intracellular glutamate. Mg(2+) is required as a cofactor. Mn(2+) serves as cofactor. Post-translationally, palmitoylated; undergoes autopalmitoylation. In terms of processing, acetylated by EP300/p300; acetylation is stimulated by increased glutamine levels and promotes ubiquitin-mediated proteasomal degradation. Ubiquitinated by ZNRF1. Ubiquitinated by the DCX (DDB1-CUL4-X-box) E3 ubiquitin-protein ligase complex called CRL4(CRBN), leading to proteasomal degradation. As to expression, in the adult liver, expression is restricted to a small population of hepatocytes which form only a small rim of one to three hepatocytes around the central veins. Expressed in lung microvascular endothelial cells.

Its subcellular location is the cytoplasm. The protein resides in the cytosol. It is found in the microsome. The protein localises to the mitochondrion. It localises to the cell membrane. It catalyses the reaction L-glutamate + NH4(+) + ATP = L-glutamine + ADP + phosphate + H(+). The catalysed reaction is L-cysteinyl-[protein] + hexadecanoyl-CoA = S-hexadecanoyl-L-cysteinyl-[protein] + CoA. With respect to regulation, glutamine synthetase activity is inhibited by methionine sulfoximine (MSO). Glutamine synthetase that catalyzes the ATP-dependent conversion of glutamate and ammonia to glutamine. Its role depends on tissue localization: in the brain, it regulates the levels of toxic ammonia and converts neurotoxic glutamate to harmless glutamine, whereas in the liver, it is one of the enzymes responsible for the removal of ammonia. Plays a key role in ammonium detoxification during erythropoiesis: the glutamine synthetase activity is required to remove ammonium generated by porphobilinogen deaminase (HMBS) during heme biosynthesis to prevent ammonium accumulation and oxidative stress. Essential for proliferation of fetal skin fibroblasts. Independently of its glutamine synthetase activity, required for endothelial cell migration during vascular development. Involved in angiogenesis by regulating membrane localization and activation of the GTPase RHOJ, possibly by promoting RHOJ palmitoylation. May act as a palmitoyltransferase for RHOJ: able to autopalmitoylate and then transfer the palmitoyl group to RHOJ. Plays a role in ribosomal 40S subunit biogenesis. Through the interaction with BEST2, inhibits BEST2 channel activity by affecting the gating at the aperture in the absence of intracellular L-glutamate, but sensitizes BEST2 to intracellular L-glutamate, which promotes the opening of BEST2 and thus relieves its inhibitory effect on BEST2. In Rattus norvegicus (Rat), this protein is Glutamine synthetase.